Reading from the N-terminus, the 473-residue chain is Photosystem II CP43 reaction center protein (473 aa).

Positions 1–14 are excised as a propeptide; that stretch reads MKTLYSLRRFYHVE. Thr15 is subject to N-acetylthreonine. A Phosphothreonine modification is found at Thr15. 5 consecutive transmembrane segments (helical) span residues 69–93, 134–155, 178–200, 255–275, and 291–312; these read LFEVAHFVPEKPMYEQGLILLPHLA, LLGPETLEESFPFFGYVWKDRN, KAFYFGGIYDTWAPGGGDVRKIT, KPFAWARRALVWSGEAYLSYS, and WFNNTAYPSEFYGPTGPEASQA. Glu367 provides a ligand contact to [CaMn4O5] cluster. A helical transmembrane segment spans residues 447–471; it reads RARAAAAGFEKGIDRDFEPVLSMTP.

It belongs to the PsbB/PsbC family. PsbC subfamily. PSII is composed of 1 copy each of membrane proteins PsbA, PsbB, PsbC, PsbD, PsbE, PsbF, PsbH, PsbI, PsbJ, PsbK, PsbL, PsbM, PsbT, PsbX, PsbY, PsbZ, Psb30/Ycf12, at least 3 peripheral proteins of the oxygen-evolving complex and a large number of cofactors. It forms dimeric complexes. Binds multiple chlorophylls and provides some of the ligands for the Ca-4Mn-5O cluster of the oxygen-evolving complex. It may also provide a ligand for a Cl- that is required for oxygen evolution. PSII binds additional chlorophylls, carotenoids and specific lipids. serves as cofactor.

The protein resides in the plastid. The protein localises to the chloroplast thylakoid membrane. Functionally, one of the components of the core complex of photosystem II (PSII). It binds chlorophyll and helps catalyze the primary light-induced photochemical processes of PSII. PSII is a light-driven water:plastoquinone oxidoreductase, using light energy to abstract electrons from H(2)O, generating O(2) and a proton gradient subsequently used for ATP formation. The sequence is that of Photosystem II CP43 reaction center protein from Pisum sativum (Garden pea).